The primary structure comprises 203 residues: Guanylate kinase (203 aa).

Residues 3 to 181 (GTLYIVAAPS…AVAEMCAIFT (179 aa)) enclose the Guanylate kinase-like domain. ATP is bound at residue 10–17 (APSGAGKS).

It belongs to the guanylate kinase family.

It is found in the cytoplasm. The catalysed reaction is GMP + ATP = GDP + ADP. Its function is as follows. Essential for recycling GMP and indirectly, cGMP. This Xanthomonas euvesicatoria pv. vesicatoria (strain 85-10) (Xanthomonas campestris pv. vesicatoria) protein is Guanylate kinase.